Here is a 340-residue protein sequence, read N- to C-terminus: MASSSSSPTPSAAAAVSPLTEEELTLTVKWNGKEYTVRICADDSVAELKRRICLLTTVLPKRQKLLYPKIGNKLSDDSLLLSSISFKPSLKMTMIGTVEDDIIVDQAESPEIVDDFELGKEEAVDVKDKEVNKQKLRRRIDQYKINLRTPCRQGKKLLVLDIDYTLFDHRSTAENPLQLMRPYLHEFLTAAYAEYDIMIWSATSMKWVELKMTELGVLNNPNYKVTALLDHLAMITVQSDTRGIFDCKPLGLIWALLPEFYNPGNTIMFDDLRRNFVMNPQNGLTIKPFRKAHANRDTDQELVKLTQYLLTIAELSDLSSLHHSRWESFSQDNVKRRRQE.

Residues 24–101 (LTLTVKWNGK…MTMIGTVEDD (78 aa)) enclose the Ubiquitin-like domain. Residues 151 to 312 (CRQGKKLLVL…VKLTQYLLTI (162 aa)) form the FCP1 homology domain. The interval 151-312 (CRQGKKLLVL…VKLTQYLLTI (162 aa)) is phosphatase. 3 residues coordinate Mg(2+): Asp161, Asp163, and Asp271.

The cofactor is Mg(2+).

Its subcellular location is the nucleus. The catalysed reaction is O-phospho-L-seryl-[protein] + H2O = L-seryl-[protein] + phosphate. It carries out the reaction O-phospho-L-threonyl-[protein] + H2O = L-threonyl-[protein] + phosphate. In terms of biological role, dephosphorylates 26S nuclear proteasomes, thereby decreasing their proteolytic activity. The dephosphorylation may prevent assembly of the core and regulatory particles (CP and RP) into mature 26S proteasome. In Arabidopsis thaliana (Mouse-ear cress), this protein is Ubiquitin-like domain-containing CTD phosphatase.